A 455-amino-acid polypeptide reads, in one-letter code: Adenylyltransferase and sulfurtransferase MOCS3 (455 aa).

ATP contacts are provided by residues glycine 90, aspartate 111, 118–122, lysine 135, and 179–180; these read SNLAR and DN. The interaction with NFS1 stretch occupies residues 156–236; sequence AQALTPATAL…RPPPAETVTS (81 aa). Zn(2+)-binding residues include cysteine 220 and cysteine 223. Catalysis depends on cysteine 237, which acts as the Glycyl thioester intermediate; for adenylyltransferase activity. The Zn(2+) site is built by cysteine 295 and cysteine 298. A disulfide bridge connects residues cysteine 314 and cysteine 322. One can recognise a Rhodanese domain in the interval 345 to 453; sequence SRSPHLLLDV…WAAKIDGTFP (109 aa). Residue cysteine 410 is the Cysteine persulfide intermediate; for sulfurtransferase activity of the active site. Cysteine persulfide is present on cysteine 410.

This sequence in the N-terminal section; belongs to the HesA/MoeB/ThiF family. UBA4 subfamily. Interacts with NFS1. It depends on Zn(2+) as a cofactor.

It localises to the cytoplasm. The protein localises to the cytosol. The enzyme catalyses [molybdopterin-synthase sulfur-carrier protein]-C-terminal Gly-Gly + ATP + H(+) = [molybdopterin-synthase sulfur-carrier protein]-C-terminal Gly-Gly-AMP + diphosphate. It catalyses the reaction [molybdopterin-synthase sulfur-carrier protein]-C-terminal Gly-Gly-AMP + S-sulfanyl-L-cysteinyl-[cysteine desulfurase] + AH2 = [molybdopterin-synthase sulfur-carrier protein]-C-terminal-Gly-aminoethanethioate + L-cysteinyl-[cysteine desulfurase] + A + AMP + 2 H(+). It participates in tRNA modification; 5-methoxycarbonylmethyl-2-thiouridine-tRNA biosynthesis. The protein operates within cofactor biosynthesis; molybdopterin biosynthesis. In terms of biological role, plays a central role in 2-thiolation of mcm(5)S(2)U at tRNA wobble positions of cytosolic tRNA(Lys), tRNA(Glu) and tRNA(Gln). Also essential during biosynthesis of the molybdenum cofactor. Acts by mediating the C-terminal thiocarboxylation of sulfur carriers URM1 and MOCS2A. Its N-terminus first activates URM1 and MOCS2A as acyl-adenylates (-COAMP), then the persulfide sulfur on the catalytic cysteine is transferred to URM1 and MOCS2A to form thiocarboxylation (-COSH) of their C-terminus. The reaction probably involves hydrogen sulfide that is generated from the persulfide intermediate and that acts as a nucleophile towards URM1 and MOCS2A. Subsequently, a transient disulfide bond is formed. Does not use thiosulfate as sulfur donor; NFS1 acting as a sulfur donor for thiocarboxylation reactions. The sequence is that of Adenylyltransferase and sulfurtransferase MOCS3 from Bos taurus (Bovine).